Reading from the N-terminus, the 251-residue chain is Aquaporin TIP1-1 (251 aa).

The residue at position 1 (Met-1) is an N-acetylmethionine. At 1–23 the chain is on the cytoplasmic side; it reads MPIRNIAIGRPDEATRPDALKAA. A helical transmembrane segment spans residues 24 to 44; sequence LAEFISTLIFVVAGSGSGMAF. The Vacuolar segment spans residues 45 to 56; the sequence is NKLTENGATTPS. The helical transmembrane segment at 57-77 threads the bilayer; that stretch reads GLVAAAVAHAFGLFVAVSVGA. Residues 78 to 103 are Cytoplasmic-facing; the sequence is NISGGHVNPAVTFGAFIGGNITLLRG. The NPA 1 motif lies at 85–87; that stretch reads NPA. Residues 104 to 124 traverse the membrane as a helical segment; the sequence is ILYWIAQLLGSVVACLILKFA. Residues 125 to 143 are Vacuolar-facing; the sequence is TGGLAVPAFGLSAGVGVLN. Residues 144–164 traverse the membrane as a helical segment; it reads AFVFEIVMTFGLVYTVYATAI. Topologically, residues 165-172 are cytoplasmic; that stretch reads DPKNGSLG. Residues 173-193 traverse the membrane as a helical segment; the sequence is TIAPIAIGFIVGANILAGGAF. Topologically, residues 194–218 are vacuolar; it reads SGASMNPAVAFGPAVVSWTWTNHWV. Residues 199–201 carry the NPA 2 motif; that stretch reads NPA. The chain crosses the membrane as a helical span at residues 219-239; that stretch reads YWAGPLVGGGIAGLIYEVFFI. The Cytoplasmic portion of the chain corresponds to 240–251; sequence NTTHEQLPTTDY.

The protein belongs to the MIP/aquaporin (TC 1.A.8) family. TIP (TC 1.A.8.10) subfamily. In terms of assembly, interacts with cucumber mosaic virus (CMV) Protein 1a. In all the vegetative organs, but not in seeds. Preferentially expressed in roots.

It is found in the vacuole membrane. Water channel required to facilitate the transport of water, diffusion of amino acids and/or peptides from the vacuolar compartment to the cytoplasm. Does not promote glycerol permeability. May play a role in the control of cell turgor and cell expansion. Its function is impaired by Hg(2+). May be involved in a vesicle-based metabolite routing through or between pre-vacuolar compartments and the central vacuole. Transports urea in yeast cells in a pH-independent manner. Transports H(2)O(2) in yeast cells. The polypeptide is Aquaporin TIP1-1 (TIP1-1) (Arabidopsis thaliana (Mouse-ear cress)).